Consider the following 740-residue polypeptide: Elongation factor 2 (740 aa).

The tr-type G domain maps to 23–264 (AQIRNAGTLA…MIIEHVPPPN (242 aa)). Residues 32-39 (AHVDHGKT), 98-102 (DTPGH), and 152-155 (NKID) each bind GTP. Residue His605 is modified to Diphthamide.

It belongs to the TRAFAC class translation factor GTPase superfamily. Classic translation factor GTPase family. EF-G/EF-2 subfamily.

The protein resides in the cytoplasm. In terms of biological role, catalyzes the GTP-dependent ribosomal translocation step during translation elongation. During this step, the ribosome changes from the pre-translocational (PRE) to the post-translocational (POST) state as the newly formed A-site-bound peptidyl-tRNA and P-site-bound deacylated tRNA move to the P and E sites, respectively. Catalyzes the coordinated movement of the two tRNA molecules, the mRNA and conformational changes in the ribosome. This chain is Elongation factor 2, found in Pyrobaculum arsenaticum (strain DSM 13514 / JCM 11321 / PZ6).